The chain runs to 31 residues: Cytochrome b6-f complex subunit 6 (31 aa).

A helical transmembrane segment spans residues 4–24 (ITSYFGFLLAVLIITSSLFIG).

Belongs to the PetL family. The 4 large subunits of the cytochrome b6-f complex are cytochrome b6, subunit IV (17 kDa polypeptide, PetD), cytochrome f and the Rieske protein, while the 4 small subunits are PetG, PetL, PetM and PetN. The complex functions as a dimer.

It is found in the plastid. It localises to the chloroplast thylakoid membrane. Component of the cytochrome b6-f complex, which mediates electron transfer between photosystem II (PSII) and photosystem I (PSI), cyclic electron flow around PSI, and state transitions. PetL is important for photoautotrophic growth as well as for electron transfer efficiency and stability of the cytochrome b6-f complex. The chain is Cytochrome b6-f complex subunit 6 from Phaseolus vulgaris (Kidney bean).